A 257-amino-acid polypeptide reads, in one-letter code: MKHSKKTYDSFQDELEDYIKVQKARGLEPKTCFRKMREDYLETYGYKEEVDSRPRCRMFEQRLPYGTVQTYPRSCSISQRVEKQLPQWLPAHDSRLRLDSLSYSQFTRDCFSGKPVPPNLSQHESNCSSYSVESGVYRHLSSENNTSAHQASYKHIHQKRKRHTEEGREKPEEERPKHKRKKACEEIDLDKYKSIQTSKTEAETVRVSTEKLKNRKEKRSRDVASKKEERKRRKEKKEQGQERTEEEMLWDQSILGF.

Residues 145 to 257 are disordered; that stretch reads NTSAHQASYK…MLWDQSILGF (113 aa). Positions 152–162 are enriched in basic residues; sequence SYKHIHQKRKR. Composition is skewed to basic and acidic residues over residues 163–176, 183–193, 200–212, and 219–228; these read HTEE…EERP, ACEEIDLDKYK, TEAE…TEKL, and RSRDVASKKE. Positions 210 to 248 form a coiled coil; sequence EKLKNRKEKRSRDVASKKEERKRRKEKKEQGQERTEEEM.

This is Lysine-rich coiled-coil protein 1 (KRCC1) from Bos taurus (Bovine).